Here is a 648-residue protein sequence, read N- to C-terminus: Rho GTPase-activating protein 25 (648 aa).

The PH domain maps to 46–151; that stretch reads RPIKVGWLKK…WVKFLRRVAG (106 aa). Residues 160–354 enclose the Rho-GAP domain; the sequence is QRLDETVAYE…MMIRDHEVLF (195 aa). Residues 356–559 are disordered; sequence KSKDAPISPP…DLDSLQRTVQ (204 aa). Phosphoserine occurs at positions 363, 396, and 403. Residues 393-410 are compositionally biased toward polar residues; the sequence is RTDSFSNTASSPDATSPT. Thr-407 carries the phosphothreonine modification. The segment covering 417–431 has biased composition (basic and acidic residues); that stretch reads QHQEDSGKAPRENPG. 2 stretches are compositionally biased toward polar residues: residues 453-462 and 497-515; these read SAFQGTTSSK and DQRTSTYDNVPTSPQSQGN. At Ser-537 the chain carries Phosphoserine. Residues 540-641 are a coiled coil; it reads EAGSKNSGED…VKEFVKSMEK (102 aa).

Functionally, GTPase activator for the Rho-type GTPases by converting them to an inactive GDP-bound state. The polypeptide is Rho GTPase-activating protein 25 (Arhgap25) (Mus musculus (Mouse)).